We begin with the raw amino-acid sequence, 346 residues long: 2,5-dichlorohydroquinone reductive dechlorinase (346 aa).

The GST N-terminal domain occupies 43 to 154 (PRFELFHFVF…YLCDALSGGT (112 aa)). The region spanning 189–335 (DRRPESMQAV…AIIQWPGHPP (147 aa)) is the GST C-terminal domain.

Belongs to the GST superfamily.

It carries out the reaction 2,5-dichlorohydroquinone + 2 glutathione = chlorohydroquinone + glutathione disulfide + chloride + H(+). The enzyme catalyses chlorohydroquinone + 2 glutathione = hydroquinone + glutathione disulfide + chloride + H(+). It functions in the pathway xenobiotic degradation; gamma-hexachlorocyclohexane degradation. Its function is as follows. Catalyzes the degradation of 2,5-dichlorohydroquinone (2,5-DCHQ) into hydroquinone (HQ) via chlorohydroquinone (CHQ). This is 2,5-dichlorohydroquinone reductive dechlorinase from Sphingobium indicum (strain DSM 16412 / CCM 7286 / MTCC 6364 / B90A).